Here is a 408-residue protein sequence, read N- to C-terminus: MKQESSLLAKLANGSLVLQILLGIAAGVILASFSQDAAKQVAFLGSLFVGALKAIAPILVFILVASSIANQKKNTQTNMRPIVVLYLFGTFAAALTAVVLSSIFPTNLVLVAGIEGTSPPQGIGEVINTLLFKLVDNPVNALMTGNYIGILAWGVGLGLALHHANDSTKQVFADMSHGISQMVRFIIRLAPIGIFGLVAATFAETGFAAIAGYAQLLAVLLSAMAIIALIVNPLIVYVKIKRNPYPLVLRCLRESGVTAFFTRSSAANIPVNMALCEKLNLNKDTYSVSIPLGATINMGGAAITITVLTLAAVHTLGIQVDLPTALLLSVVAAVSACGASGVAGGSLLLIPLACSLFGISNDIAMQVVAVGFIIGVIQDAAETALNSSTDVIFTAAACEAAENKAKLG.

Transmembrane regions (helical) follow at residues 11 to 31 (LANG…VILA), 43 to 63 (FLGS…VFIL), 81 to 101 (PIVV…VVLS), 141 to 161 (ALMT…GLAL), 192 to 212 (IGIF…AIAG), 216 to 236 (LLAV…PLIV), 298 to 318 (MGGA…TLGI), 330 to 350 (VVAA…LLLI), and 357 to 377 (FGIS…IGVI).

Belongs to the dicarboxylate/amino acid:cation symporter (DAACS) (TC 2.A.23) family.

Its subcellular location is the cell inner membrane. The catalysed reaction is L-serine(in) + Na(+)(in) = L-serine(out) + Na(+)(out). The enzyme catalyses L-threonine(in) + Na(+)(in) = L-threonine(out) + Na(+)(out). Functionally, involved in the import of serine and threonine into the cell, with the concomitant import of sodium (symport system). The protein is Serine/threonine transporter SstT of Shewanella sp. (strain W3-18-1).